A 327-amino-acid polypeptide reads, in one-letter code: HTH-type transcriptional regulator EbgR (327 aa).

One can recognise an HTH lacI-type domain in the interval 1-57; sequence MATLKDIAIEAGVSLATVSRVLNDDPTLNVKEETKHRILEIAEKLEYKTSSARKLQT. Residues 4-23 constitute a DNA-binding region (H-T-H motif); it reads LKDIAIEAGVSLATVSRVLN.

In terms of biological role, repressor for beta galactosidase alpha and beta subunits (ebgA and ebgC). Binds lactose as an inducer. This Escherichia coli (strain K12) protein is HTH-type transcriptional regulator EbgR (ebgR).